The sequence spans 181 residues: Protoporphyrinogen IX dehydrogenase [quinone] (181 aa).

One can recognise a Flavodoxin-like domain in the interval 3-172 (TLILFSTRDG…QVANFAREIA (170 aa)). Residues 9–13 (TRDGQ) and 84–152 (FYSV…ETDT) each bind FMN.

This sequence belongs to the HemG family. Requires FMN as cofactor.

It is found in the cell inner membrane. It catalyses the reaction protoporphyrinogen IX + 3 a menaquinone = protoporphyrin IX + 3 a menaquinol. It carries out the reaction protoporphyrinogen IX + 3 a ubiquinone = protoporphyrin IX + 3 a ubiquinol. The catalysed reaction is protoporphyrinogen IX + 3 a quinone = protoporphyrin IX + 3 a quinol. Its pathway is porphyrin-containing compound metabolism; protoporphyrin-IX biosynthesis; protoporphyrin-IX from protoporphyrinogen-IX: step 1/1. Its function is as follows. Catalyzes the 6-electron oxidation of protoporphyrinogen IX to form protoporphyrin IX; under anaerobic conditions uses menaquinone as an electron acceptor, under aerobic condition uses ubiquinone as an electron acceptor. The sequence is that of Protoporphyrinogen IX dehydrogenase [quinone] from Escherichia coli O157:H7.